The sequence spans 623 residues: Protein skinhead-1 (623 aa).

Disordered regions lie at residues 1-29, 158-184, 421-451, and 467-557; these read MGGS…FSSV, TEHP…YEYS, YQST…GSVT, and QRHS…LASD. The residue at position 164 (Ser164) is a Phosphoserine; by pmk-1. Over residues 173–184 the composition is skewed to polar residues; that stretch reads ERPTTSSRYEYS. Residue Ser430 is modified to Phosphoserine; by pmk-1. Low complexity-rich tracts occupy residues 435 to 449, 472 to 498, and 511 to 529; these read GSSG…SPGS, SDCT…ESST, and PSSG…SQSS. A basic motif region spans residues 540 to 623; sequence SGQRKRGRQS…DRHDKMSHYI (84 aa).

This sequence belongs to the bZIP family. Skn1 subfamily. As to quaternary structure, monomer. Interacts with GATA factor elt-3; interaction may enhance transcriptional activation of target genes. In terms of assembly, interacts with pgma-5. Interacts with transcription factor mxl-3 (via N-terminus). In terms of processing, cleaved by the aspartic protease ddi-1. Postembryonic intestinal cells.

The protein localises to the nucleus. Its subcellular location is the cytoplasm. The protein resides in the mitochondrion. Its function is as follows. Transcription factor. Required to specify the fate of ventral blastomeres in the early embryo, and postembryonically for the development of the intestine. Directly regulates expression of zygotically expressed med-1 and med-2 to direct mesendoderm development. In response to oxidative stress and anoxia, required to up-regulate expression of stl-1 mRNA. Involved in regulating innate immunity, acting downstream of the pmk-1 p38/MAPK pathway and probably also downstream of nipi-3. Required for the up-regulation of phase II detoxification genes, including gcs-1 and several glutathione-S-transferase mRNAs in response to oxidative stress generated during pathogenic bacterial infection. Modulates oxidative stress responses in concert with transcription factors such as hcf-1 and elt-3. Regulates the transcription of genes associated with metabolism in response to changes in nutrient availability. In neurons, involved in mitochondrial fusion and behavioral recovery during reoxygenation. Required for riok-1 mRNA expression in the intestine. Downstream of the let-60/Ras, mek-2 and pmk-1 pathway, positively regulates lifespan probably by preventing transcription of insulin-like peptides such as ins-39. Prevents degeneration of dopaminergic CEP neurons in response to high Al(3+) or Mn(2+) levels, probably by promoting the expression of glutathione-S-transferase gst-1. Directed by the ER-associated degradation pathway (ERAD), mediates proteasomal homeostasis by regulating the expression of proteasomal subunits such as rpt-3 to confer resistance to proteasomal dysfunction. The protein is Protein skinhead-1 (skn-1) of Caenorhabditis elegans.